Reading from the N-terminus, the 227-residue chain is E3 ubiquitin-protein ligase ZNRF1 (227 aa).

Residues 1–38 (MGGKQSTAARSRGPFPGVSTDDSAVPPPGGAPHFGHYR) are disordered. Residue G2 is the site of N-myristoyl glycine attachment. The interval 2–10 (GGKQSTAAR) is required for endosomal and lysosomal localization and myristoylation. 3 positions are modified to phosphoserine: S50, S52, and S53. The interval 77–105 (RGAGDAERAPGSGGSASDSTYAHGNGYQE) is disordered. Y103 bears the Phosphotyrosine mark. S123 bears the Phosphoserine mark. The segment at 184 to 225 (CVICLEELLQGDTIARLPCLCIYHKSCIDSWFEVNRSCPEHP) adopts an RING-type; atypical zinc-finger fold.

Interacts with AKT1, GLUL and TUBB2A. Interacts with ZNRF2. Interacts (via its RING domain) with UBE2N. Interacts (when phosphorylated) with YWHAE. N-myristoylation targets ZNRF1 to intracellular membranes. Post-translationally, phosphorylated by SRC at Tyr-103; leading to 'Lys-63'-linked ubiquitination of TLR3, lysosomal trafficking and degradation.

The protein localises to the endosome. Its subcellular location is the lysosome. It localises to the membrane. The protein resides in the cytoplasmic vesicle. It is found in the secretory vesicle. The protein localises to the synaptic vesicle membrane. It catalyses the reaction S-ubiquitinyl-[E2 ubiquitin-conjugating enzyme]-L-cysteine + [acceptor protein]-L-lysine = [E2 ubiquitin-conjugating enzyme]-L-cysteine + N(6)-ubiquitinyl-[acceptor protein]-L-lysine.. It functions in the pathway protein modification; protein ubiquitination. In terms of biological role, E3 ubiquitin-protein ligase that plays a role in different processes including cell differentiation, receptor recycling or regulation of inflammation. Mediates the ubiquitination of AKT1 and GLUL, thereby playing a role in neuron cells differentiation. Plays a role in the establishment and maintenance of neuronal transmission and plasticity. Regulates Schwann cells differentiation by mediating ubiquitination of GLUL. Promotes neurodegeneration by mediating 'Lys-48'-linked polyubiquitination and subsequent degradation of AKT1 in axons: degradation of AKT1 prevents AKT1-mediated phosphorylation of GSK3B, leading to GSK3B activation and phosphorylation of DPYSL2/CRMP2 followed by destabilization of microtubule assembly in axons. Ubiquitinates the Na(+)/K(+) ATPase alpha-1 subunit/ATP1A1 and thereby influences its endocytosis and/or degradation. Controls ligand-induced EGFR signaling via mediating receptor ubiquitination and recruitment of the ESCRT machinery. Acts as a negative feedback mechanism controlling TLR3 trafficking by mediating TLR3 'Lys-63'-linked polyubiquitination to reduce type I IFN production. Modulates inflammation by promoting caveolin-1/CAV1 ubiquitination and degradation to regulate TLR4-activated immune response. In Bos taurus (Bovine), this protein is E3 ubiquitin-protein ligase ZNRF1 (ZNRF1).